The chain runs to 340 residues: MTSRTTTATELDEIYTFAVQLGKDAGNLLMEAARLRFSNNNANHDKESTTQEFTEKDSAVDIVTQTDEDVEAFIKSAINTRYPSHDFIGEETYAKSSQSTRPYLVTHTTPTWVVDPLDGTVNYTHLFPMFCVSIAFLVDGTPVIGVICAPMLGQLFTACKGRGAWLNETQRLPLVRQPMPKSAPGGCVFSCEWGKDRKDRPEGNLYRKVESFVNMAAEVGGRGGKGGMVHGVRSLGSATLDLAYTAMGSFDIWWEGGCWEWDVAAGIAILQEAGGLITSANPPEDWATAEIPDVKLGSRLYLVVRPAGPSEGETAREGQERTIREVWRRVRALDYTRPGA.

Positions 90, 115, 117, 118, and 262 each coordinate Mg(2+). Residue E90 participates in substrate binding. Substrate contacts are provided by residues 117–120 (LDGT) and D262.

Belongs to the inositol monophosphatase superfamily.

Its function is as follows. Part of the qa gene cluster that mediates the catabolism of quinic acid (QA) and as such, allows the use of QA as a sole carbon source. Its function within the pathway has not been determined yet but it probably plays a regulatory role. The qa cluster encodes 3 inducible enymes (qa-2, qa-3 and qa-4) catalyzing the first three reactions in the catabolism of quinic acid to protocatechuic acid (also known as 3,4-Dihydroxybenzoic acid). The protein is Quinic acid degradation cluster protein x of Neurospora crassa (strain ATCC 24698 / 74-OR23-1A / CBS 708.71 / DSM 1257 / FGSC 987).